Here is a 90-residue protein sequence, read N- to C-terminus: Gene 56 protein (90 aa).

A Glutaredoxin domain is found at 1 to 90; sequence MRTMFTPITI…DYYTASETGL (90 aa). Residues Cys-16 and Cys-19 are joined by a disulfide bond.

The sequence is that of Gene 56 protein (56) from Mycobacterium phage D29 (Mycobacteriophage D29).